The chain runs to 54 residues: ComX pheromone (54 aa).

A propeptide spanning residues M1–Y46 is cleaved from the precursor. Residue W51 is the site of 3'-geranyl-2',N2-cyclotryptophan attachment.

In terms of assembly, interacts directly with the sensor histidine kinase ComP and stimulates its activity. In terms of processing, trp-51 is modified by isoprenylation, probably by geranylation, which is essential for activity. Modified by the tryptophan prenyltransferase ComQ before export to the extracellular environment. The type of isoprenyl derivative differs among the different pherotypes and depends on ComX primary sequence.

The protein resides in the secreted. In terms of biological role, part of a major quorum-sensing system that regulates the development of genetic competence. Acts through the activation of the two-component regulatory system ComP/ComA composed of a sensor histidine kinase, ComP, and a response regulator, ComA. This chain is ComX pheromone, found in Bacillus mojavensis.